Consider the following 949-residue polypeptide: Sensor histidine kinase RcsC (949 aa).

Over Met1 to Arg19 the chain is Cytoplasmic. A helical membrane pass occupies residues Ala20–Leu41. The Periplasmic portion of the chain corresponds to His42–Arg313. A helical transmembrane segment spans residues Met314–Arg335. The Cytoplasmic portion of the chain corresponds to Met336 to Ser949. The PAS domain maps to Gln357–Gln425. The Histidine kinase domain occupies Thr476–Gly692. His479 is subject to Phosphohistidine; by autocatalysis. The ABL domain maps to Ser705–Ser805. A Response regulatory domain is found at Met826 to Ala940. 4-aspartylphosphate is present on Asp875.

The protein belongs to the RcsC family. Interacts with RcsD. Post-translationally, autophosphorylated. Activation probably requires a transfer of a phosphate group from a His in the transmitter domain to an Asp in the receiver domain.

The protein resides in the cell inner membrane. The enzyme catalyses ATP + protein L-histidine = ADP + protein N-phospho-L-histidine.. Its activity is regulated as follows. The Rcs phosphorelay may be activated by RcsF. DjlA, LolA and OmpG might act as a regulator of the phosphorelay. Activity is probably up-regulated by YmgA/AriR, and possibly down-regulated by YcgZ, all 3 are connector proteins providing additional signal input into signaling system. In terms of biological role, component of the Rcs signaling system, which controls transcription of numerous genes. RcsC functions as a membrane-associated protein kinase that phosphorylates RcsD in response to environmental signals. The phosphoryl group is then transferred to the response regulator RcsB. RcsC also has phosphatase activity. The system controls expression of genes involved in colanic acid capsule synthesis, biofilm formation and cell division. The sequence is that of Sensor histidine kinase RcsC from Escherichia coli (strain K12).